Reading from the N-terminus, the 153-residue chain is UPF0260 protein CKO_01185 (153 aa).

The protein belongs to the UPF0260 family.

The chain is UPF0260 protein CKO_01185 from Citrobacter koseri (strain ATCC BAA-895 / CDC 4225-83 / SGSC4696).